A 317-amino-acid chain; its full sequence is Serpentine receptor class delta-26 (317 aa).

7 consecutive transmembrane segments (helical) span residues 5 to 25 (LLHT…MYLA), 38 to 58 (AIIT…FFVM), 83 to 103 (ACYV…IWMI), 122 to 142 (SLVF…AAWI), 176 to 196 (ITLI…YAWI), 227 to 247 (FQVF…AMFG), and 258 to 278 (LVSI…ILFV).

This sequence belongs to the nematode receptor-like protein srd family.

The protein localises to the membrane. This is Serpentine receptor class delta-26 (srd-26) from Caenorhabditis elegans.